Reading from the N-terminus, the 455-residue chain is Ribulose bisphosphate carboxylase large chain (455 aa).

The residue at position 5 (K5) is an N6,N6,N6-trimethyllysine. Positions 114 and 164 each coordinate substrate. The active-site Proton acceptor is K166. K168 provides a ligand contact to substrate. Residues K192, D194, and E195 each contribute to the Mg(2+) site. K192 carries the N6-carboxylysine modification. H285 serves as the catalytic Proton acceptor. Substrate is bound by residues R286, H318, and S370.

This sequence belongs to the RuBisCO large chain family. Type I subfamily. As to quaternary structure, heterohexadecamer of 8 large chains and 8 small chains; disulfide-linked. The disulfide link is formed within the large subunit homodimers. Requires Mg(2+) as cofactor. In terms of processing, the disulfide bond which can form in the large chain dimeric partners within the hexadecamer appears to be associated with oxidative stress and protein turnover.

It localises to the plastid. Its subcellular location is the chloroplast. It carries out the reaction 2 (2R)-3-phosphoglycerate + 2 H(+) = D-ribulose 1,5-bisphosphate + CO2 + H2O. The enzyme catalyses D-ribulose 1,5-bisphosphate + O2 = 2-phosphoglycolate + (2R)-3-phosphoglycerate + 2 H(+). In terms of biological role, ruBisCO catalyzes two reactions: the carboxylation of D-ribulose 1,5-bisphosphate, the primary event in carbon dioxide fixation, as well as the oxidative fragmentation of the pentose substrate in the photorespiration process. Both reactions occur simultaneously and in competition at the same active site. The sequence is that of Ribulose bisphosphate carboxylase large chain from Lupinus microcarpus (Chick lupine).